Consider the following 95-residue polypeptide: Aspartyl/glutamyl-tRNA(Asn/Gln) amidotransferase subunit C (95 aa).

This sequence belongs to the GatC family. In terms of assembly, heterotrimer of A, B and C subunits.

It catalyses the reaction L-glutamyl-tRNA(Gln) + L-glutamine + ATP + H2O = L-glutaminyl-tRNA(Gln) + L-glutamate + ADP + phosphate + H(+). It carries out the reaction L-aspartyl-tRNA(Asn) + L-glutamine + ATP + H2O = L-asparaginyl-tRNA(Asn) + L-glutamate + ADP + phosphate + 2 H(+). Allows the formation of correctly charged Asn-tRNA(Asn) or Gln-tRNA(Gln) through the transamidation of misacylated Asp-tRNA(Asn) or Glu-tRNA(Gln) in organisms which lack either or both of asparaginyl-tRNA or glutaminyl-tRNA synthetases. The reaction takes place in the presence of glutamine and ATP through an activated phospho-Asp-tRNA(Asn) or phospho-Glu-tRNA(Gln). This Cereibacter sphaeroides (strain ATCC 17023 / DSM 158 / JCM 6121 / CCUG 31486 / LMG 2827 / NBRC 12203 / NCIMB 8253 / ATH 2.4.1.) (Rhodobacter sphaeroides) protein is Aspartyl/glutamyl-tRNA(Asn/Gln) amidotransferase subunit C.